Here is a 783-residue protein sequence, read N- to C-terminus: Polyadenylate-binding protein, cytoplasmic and nuclear (783 aa).

The disordered stretch occupies residues 16-65 (DLGNTSLGGGDNRAAPAINTNVAPGEYQTADPDTAGPTPSSAAPHPQSSA). A compositionally biased stretch (low complexity) spans 54–65 (PSSAAPHPQSSA). 4 consecutive RRM domains span residues 65–143 (ASLY…WSQR), 153–230 (GNVF…YHIP), 246–323 (TNIY…RAQK), and 349–471 (VNLY…LAQR). Disordered regions lie at residues 381–428 (MRDA…KGDR), 596–671 (AAAL…AAGG), and 752–783 (VKSQ…EEKA). Over residues 396–406 (GKDKENKKEGE) the composition is skewed to basic and acidic residues. Residues 407–416 (QAAEAEGEAE) are compositionally biased toward acidic residues. Residues 417 to 428 (GAEKKTEKKGDR) show a composition bias toward basic and acidic residues. The segment covering 601 to 614 (NGRGGPGGPGGRGM) has biased composition (gly residues). Residues 630–641 (AGFPPNGRPQNG) show a composition bias toward low complexity. Residues 642 to 655 (NMGGRGGPGRGGNF) are compositionally biased toward gly residues. Residues 656–671 (AAGRGAPPAGPLAAGG) show a composition bias toward low complexity. In terms of domain architecture, PABC spans 676 to 753 (SSLLQSQLTA…AMAVYDEYVK (78 aa)). Over residues 770–783 (EAEKPKEEKAEEKA) the composition is skewed to basic and acidic residues.

It belongs to the polyadenylate-binding protein type-1 family.

It localises to the cytoplasm. The protein localises to the nucleus. Binds the poly(A) tail of mRNA. Appears to be an important mediator of the multiple roles of the poly(A) tail in mRNA biogenesis, stability and translation. In the nucleus, involved in both mRNA cleavage and polyadenylation. Is also required for efficient mRNA export to the cytoplasm. Acts in concert with a poly(A)-specific nuclease (PAN) to affect poly(A) tail shortening, which may occur concomitantly with either nucleocytoplasmic mRNA transport or translational initiation. In the cytoplasm, stimulates translation initiation and regulates mRNA decay through translation termination-coupled poly(A) shortening, probably mediated by PAN. The sequence is that of Polyadenylate-binding protein, cytoplasmic and nuclear (PAB1) from Chaetomium globosum (strain ATCC 6205 / CBS 148.51 / DSM 1962 / NBRC 6347 / NRRL 1970) (Soil fungus).